The chain runs to 257 residues: RLA class II histocompatibility antigen, DP beta chain (257 aa).

Positions 1 to 29 are cleaved as a signal peptide; that stretch reads MRPCRSLRTAALAVVLTVLLHPVALGRAT. Residues 30–120 form a beta-1 region; the sequence is PGESEQNYLW…LFQGLPVLLQ (91 aa). The Extracellular portion of the chain corresponds to 30-224; it reads PGESEQNYLW…KAQSDSARSK (195 aa). Cystine bridges form between Cys45–Cys105 and Cys143–Cys199. The N-linked (GlcNAc...) asparagine glycan is linked to Asn49. Residues 121 to 214 form a beta-2 region; it reads TQPRVSVSPS…SLDSPITVEW (94 aa). Residues 123–211 enclose the Ig-like C1-type domain; that stretch reads PRVSVSPSKK…EHPSLDSPIT (89 aa). Residues 215-224 form a connecting peptide region; sequence KAQSDSARSK. Residues 225 to 245 form a helical membrane-spanning segment; that stretch reads MLAGVGGLVLGLVSLAVGVFM. Residues 246-257 lie on the Cytoplasmic side of the membrane; it reads HRRSKKAQQGCR.

The protein belongs to the MHC class II family.

The protein localises to the membrane. In Oryctolagus cuniculus (Rabbit), this protein is RLA class II histocompatibility antigen, DP beta chain.